The sequence spans 140 residues: Cystatin-C (140 aa).

A signal peptide spans 1 to 20; sequence MASPLRSLLFLLAVLAVAWA. A Secondary area of contact motif is present at residues 75–79; the sequence is QLVAG. Intrachain disulfides connect cysteine 93/cysteine 103 and cysteine 117/cysteine 137.

The protein belongs to the cystatin family.

The protein resides in the secreted. As an inhibitor of cysteine proteinases, this protein is thought to serve an important physiological role as a local regulator of this enzyme activity. The protein is Cystatin-C (Cst3) of Mus musculus (Mouse).